The sequence spans 772 residues: MRTLEDSSGTVLHRLIQEQLRYGNLTETRTLLAIQQQALRGGAGAGGTGSPQASLEIGAPEDSQVLQQATRQEPQGQEHQGGETHLAENRLYRLCPQPSKGEELPTYEEAKAHSQYYAAQQAGSRPHVGDRDPRGGVSGGGRRQDEALRELRHGHVRSLSERLLQLSLERNGARVPSHMSSSHSFPQLARSQQGPQPRGPPAEGPEPRGPPPQYPHAVMAQETAAVTDPRYRPRSSPHFQHAEVRILQAQVPPVFLQQQQYQYLPQPQEHSPPLHPAALGHGPPSSFGPPAVEGPPSAQATLGSAHLAQMETVLRENARLQRDNERLQRELESTSEKAGRIEKLENEIQRLSEAHESLMRTSSKREALEKTMRNKMDGEMRRLQDFNRDLRERLESANRHLASKTQEAQAGSQDMVAKLLAQSYEQQQEQEKLEREMALLRGAIEDQRRHAELLEQALGNAQSRAARAEEELRKKQAYVEKVERLQQALGQLQAACEKREQLELRLRTRLEQELKALRAQQRQTGTLAGGGGSHGGSAELSALRLSEQLREKEEQILALEADMTKWEQKYLEERAMRQFAMDAAATAAAQRDTTLIRHSPQPSPSSSFNEGLLPGNHRHQEMESRLKVLHAQILEKDAVIKVLQQRSRKDPGKATQGTLRPAKSVPSIFAAAVGTQGWQGLVSSERQTDARPAGDRVPAEEPPATAPLPAHTKHGSRDGSTQTDGPADNTSACLASEPDGLLGCNSSQRTPSLDSIAATRVQDLSDMVEILI.

Disordered regions lie at residues 41–158 (GGAG…HVRS), 170–239 (RNGA…SPHF), and 260–299 (QYQY…PSAQ). Composition is skewed to basic and acidic residues over residues 80 to 91 (QGGETHLAENRL), 100 to 112 (KGEE…EAKA), and 142 to 153 (RRQDEALRELRH). Positions 101–303 (GEELPTYEEA…GPPSAQATLG (203 aa)) are required for interaction with CDH5. At tyrosine 107 the chain carries Phosphotyrosine; by FGFR1. Positions 178-191 (HMSSSHSFPQLARS) are enriched in polar residues. Over residues 197 to 214 (PRGPPAEGPEPRGPPPQY) the composition is skewed to pro residues. Residues 221–303 (QETAAVTDPR…GPPSAQATLG (83 aa)) form a required for interaction with CDH1 region. A coiled-coil region spans residues 305-578 (AHLAQMETVL…KYLEERAMRQ (274 aa)). Residues lysine 343 and lysine 404 each participate in a glycyl lysine isopeptide (Lys-Gly) (interchain with G-Cter in ubiquitin) cross-link. Disordered regions lie at residues 596-615 (IRHS…LLPG) and 680-752 (GLVS…RTPS). The span at 686–699 (RQTDARPAGDRVPA) shows a compositional bias: basic and acidic residues. Positions 718 to 733 (DGSTQTDGPADNTSAC) are enriched in polar residues. Residues serine 752 and serine 755 each carry the phosphoserine modification. The PDZ-binding signature appears at 769 to 772 (EILI).

The protein belongs to the angiomotin family. As to quaternary structure, part of a complex composed of AMOTL2, MAGI1 and CDH5, within the complex AMOTL2 acts as a scaffold protein for the interaction of MAGI1 with CDH5. The complex is required for coupling actin fibers to cell junctions in endothelial cells. Within the complex AMOTL2 (via its N-terminus) interacts with CDH5. Interacts (via N-terminus) with MAGI1. Interacts (via N-terminus) with ACTB; the interaction facilitates binding of cell junction complexes to actin fibers in endothelial cells. Interacts with CDH1; the interaction may facilitate binding of radial actin fibers to cell junction complexes. Interacts with SRC. Interacts with YAP1; the interaction is required for ubiquitination of AMOTL2 and localization of YAP1 to tight junctions. Interacts with WWP1; the interaction facilitates WWP1 interaction with the Crumbs complex and subsequent WWP1 translocation to the plasma membrane. WWP1 interaction with the Crumbs complex promotes WWP1 monoubiquitination of AMOTL2 which subsequently activates the Hippo signaling pathway. When ubiquitinated interacts with LATS2 (via UBA domain); the interaction promotes LATS2 phosphorylation of YAP1. Interacts (via PPXY motif) with WWTR1/TAZ (via WW domain); the interaction promotes WWTR1/TAZ localization to the cytoplasm and thereby inhibition of its transcriptional properties. Interacts with PHLDB2; interaction may facilitate PHLDB2 localization to the myotube podosome cortex that surrounds the core. In terms of processing, phosphorylation at Tyr-107 is necessary for efficient binding to SRC and synergistically functioning with SRC to activate the downstream MAPK pathway. Post-translationally, monoubiquitinated at Lys-343 and Lys-404 by Crumbs complex-bound WWP1. De-ubiquitinated at Lys-343 and Lys-404 by USP9X; the interaction may be promoted by cell contact inhibition. Deubiquitination of AMOTL2 negatively regulates Hippo signaling activation. Expressed in skeletal muscle at neuromuscular junctions (at protein level).

It is found in the recycling endosome. The protein localises to the cytoplasm. The protein resides in the cell projection. Its subcellular location is the podosome. It localises to the cell junction. Functionally, regulates the translocation of phosphorylated SRC to peripheral cell-matrix adhesion sites. Required for proper architecture of actin filaments. Plays a role in coupling actin fibers to cell junctions in endothelial cells and is therefore required for correct endothelial cell morphology via facilitating transcellular transmission of mechanical force resulting in endothelial cell elongation. Required for the anchoring of radial actin fibers to CDH1 junction complexes at the cell membrane which facilitates organization of radial actin fiber structure and cellular response to contractile forces. This contributes to maintenance of cell area, size, shape, epithelial sheet organization and trophectoderm cell properties that facilitate blastocyst zona hatching. Inhibits the Wnt/beta-catenin signaling pathway, probably by recruiting CTNNB1 to recycling endosomes and hence preventing its translocation to the nucleus. Participates in angiogenesis. Activates the Hippo signaling pathway in response to cell contact inhibition via interaction with and ubiquitination by Crumbs complex-bound WWP1. Ubiquitinated AMOTL2 then interacts with LATS2 which in turn phosphorylates YAP1, excluding it from the nucleus and localizing it to the cytoplasm and tight junctions, therefore ultimately repressing YAP1-driven transcription of target genes. Acts to inhibit WWTR1/TAZ transcriptional coactivator activity via sequestering WWTR1/TAZ in the cytoplasm and at tight junctions. Regulates the size and protein composition of the podosome cortex and core at myofibril neuromuscular junctions. Selectively promotes FGF-induced MAPK activation through SRC. May play a role in the polarity, proliferation and migration of endothelial cells. This Mus musculus (Mouse) protein is Angiomotin-like protein 2.